The chain runs to 441 residues: Insulinoma-associated protein 1 (441 aa).

Positions 1 to 12 are enriched in basic residues; the sequence is MPKGFLVKRSRK. The interval 1-20 is SNAG domain; the sequence is MPKGFLVKRSRKSPPVSYRV. Disordered stretches follow at residues 1-31, 43-189, 205-224, and 278-316; these read MPKG…GESL, TGGA…KAIR, LKIK…SSGP, and RWHK…EDGL. A compositionally biased stretch (basic and acidic residues) spans 19–28; that stretch reads RVREEEEPRG. Residues 74 to 83 show a composition bias toward polar residues; that stretch reads NPDTVQQALY. Over residues 89–98 the composition is skewed to basic and acidic residues; it reads VSREQRERKY. Low complexity-rich tracts occupy residues 138-147 and 169-180; these read VSSSSSVSRS and GATSSSAPSKPP. A C2H2-type 1 zinc finger spans residues 258–280; the sequence is YRCPECHKVFSCPANLASHRRWH. Positions 292-302 are enriched in basic and acidic residues; sequence AKEEPLSDRDT. 3 consecutive C2H2-type zinc fingers follow at residues 317–339, 372–395, and 400–423; these read YECP…LLSH, HPCP…RLLH, and YPCK…NKCH.

It belongs to the INSM1 family.

It is found in the nucleus. May act as a transcriptional regulator. Plays a role in noradrenergic neuron, pancreatic and gastrointestinal endocrine cells differentiation during embryonic development. This Xenopus tropicalis (Western clawed frog) protein is Insulinoma-associated protein 1 (insm1).